The chain runs to 520 residues: Cilia- and flagella-associated protein 157 (520 aa).

Residues methionine 1–lysine 22 form a disordered region. A compositionally biased stretch (basic and acidic residues) spans alanine 10–lysine 22. 2 coiled-coil regions span residues leucine 33–lysine 189 and leucine 236–serine 372. The segment at proline 416–aspartate 453 is disordered. The segment covering proline 437 to aspartate 453 has biased composition (polar residues).

Belongs to the CFAP157 family. As to quaternary structure, interacts with TUBB and TUBA4A. Interacts with CEP350.

The protein localises to the cytoplasm. The protein resides in the cytoskeleton. It is found in the cilium basal body. Functionally, specifically required during spermatogenesis for flagellum morphogenesis and sperm motility. May be required to suppress the formation of supernumerary axonemes and ensure a correct ultrastructure. The sequence is that of Cilia- and flagella-associated protein 157 from Homo sapiens (Human).